Here is a 308-residue protein sequence, read N- to C-terminus: Homoserine kinase (308 aa).

ATP is bound at residue 95–105 (PQSRGLGSSAA).

Belongs to the GHMP kinase family. Homoserine kinase subfamily.

It localises to the cytoplasm. It catalyses the reaction L-homoserine + ATP = O-phospho-L-homoserine + ADP + H(+). The protein operates within amino-acid biosynthesis; L-threonine biosynthesis; L-threonine from L-aspartate: step 4/5. In terms of biological role, catalyzes the ATP-dependent phosphorylation of L-homoserine to L-homoserine phosphate. This Corynebacterium diphtheriae (strain ATCC 700971 / NCTC 13129 / Biotype gravis) protein is Homoserine kinase.